We begin with the raw amino-acid sequence, 355 residues long: DNA polymerase IV (355 aa).

The region spanning 4-185 (IIHVDMDCFY…LPLKKIPGVG (182 aa)) is the UmuC domain. Positions 8 and 103 each coordinate Mg(2+). The active site involves Glu-104.

This sequence belongs to the DNA polymerase type-Y family. Monomer. It depends on Mg(2+) as a cofactor.

The protein resides in the cytoplasm. It catalyses the reaction DNA(n) + a 2'-deoxyribonucleoside 5'-triphosphate = DNA(n+1) + diphosphate. Functionally, poorly processive, error-prone DNA polymerase involved in untargeted mutagenesis. Copies undamaged DNA at stalled replication forks, which arise in vivo from mismatched or misaligned primer ends. These misaligned primers can be extended by PolIV. Exhibits no 3'-5' exonuclease (proofreading) activity. May be involved in translesional synthesis, in conjunction with the beta clamp from PolIII. In Pasteurella multocida (strain Pm70), this protein is DNA polymerase IV.